We begin with the raw amino-acid sequence, 466 residues long: Ribulose bisphosphate carboxylase large chain (466 aa).

Lysine 4 is subject to N6,N6,N6-trimethyllysine. Residues asparagine 113 and threonine 163 each coordinate substrate. The Proton acceptor role is filled by lysine 165. Lysine 167 serves as a coordination point for substrate. 3 residues coordinate Mg(2+): lysine 191, aspartate 193, and glutamate 194. Lysine 191 is subject to N6-carboxylysine. Histidine 284 acts as the Proton acceptor in catalysis. Substrate contacts are provided by arginine 285, histidine 317, and serine 369.

Belongs to the RuBisCO large chain family. Type I subfamily. Heterohexadecamer of 8 large chains and 8 small chains; disulfide-linked. The disulfide link is formed within the large subunit homodimers. Requires Mg(2+) as cofactor. The disulfide bond which can form in the large chain dimeric partners within the hexadecamer appears to be associated with oxidative stress and protein turnover.

The protein resides in the plastid. It localises to the chloroplast. The enzyme catalyses 2 (2R)-3-phosphoglycerate + 2 H(+) = D-ribulose 1,5-bisphosphate + CO2 + H2O. It catalyses the reaction D-ribulose 1,5-bisphosphate + O2 = 2-phosphoglycolate + (2R)-3-phosphoglycerate + 2 H(+). Functionally, ruBisCO catalyzes two reactions: the carboxylation of D-ribulose 1,5-bisphosphate, the primary event in carbon dioxide fixation, as well as the oxidative fragmentation of the pentose substrate in the photorespiration process. Both reactions occur simultaneously and in competition at the same active site. The sequence is that of Ribulose bisphosphate carboxylase large chain from Proboscidea louisianica (Louisiana Devil's-claw).